We begin with the raw amino-acid sequence, 364 residues long: tRNA 2-selenouridine synthase (364 aa).

A Rhodanese domain is found at leucine 14–tryptophan 137. The S-selanylcysteine intermediate role is filled by cysteine 97.

Belongs to the SelU family. Monomer.

The enzyme catalyses 5-methylaminomethyl-2-thiouridine(34) in tRNA + selenophosphate + (2E)-geranyl diphosphate + H2O + H(+) = 5-methylaminomethyl-2-selenouridine(34) in tRNA + (2E)-thiogeraniol + phosphate + diphosphate. It catalyses the reaction 5-methylaminomethyl-2-thiouridine(34) in tRNA + (2E)-geranyl diphosphate = 5-methylaminomethyl-S-(2E)-geranyl-thiouridine(34) in tRNA + diphosphate. It carries out the reaction 5-methylaminomethyl-S-(2E)-geranyl-thiouridine(34) in tRNA + selenophosphate + H(+) = 5-methylaminomethyl-2-(Se-phospho)selenouridine(34) in tRNA + (2E)-thiogeraniol. The catalysed reaction is 5-methylaminomethyl-2-(Se-phospho)selenouridine(34) in tRNA + H2O = 5-methylaminomethyl-2-selenouridine(34) in tRNA + phosphate. Its function is as follows. Involved in the post-transcriptional modification of the uridine at the wobble position (U34) of tRNA(Lys), tRNA(Glu) and tRNA(Gln). Catalyzes the conversion of 2-thiouridine (S2U-RNA) to 2-selenouridine (Se2U-RNA). Acts in a two-step process involving geranylation of 2-thiouridine (S2U) to S-geranyl-2-thiouridine (geS2U) and subsequent selenation of the latter derivative to 2-selenouridine (Se2U) in the tRNA chain. The chain is tRNA 2-selenouridine synthase from Salmonella gallinarum (strain 287/91 / NCTC 13346).